We begin with the raw amino-acid sequence, 85 residues long: Fungal defensin triintsin (85 aa).

The signal sequence occupies residues 1 to 21; it reads MQFTKLATVLIVSLMGSAAIA. A propeptide spanning residues 22–47 is cleaved from the precursor; sequence APSVDNAPAVAAEEVAAAPAENLEKR. 3 disulfide bridges follow: C51–C72, C58–C80, and C62–C82.

It belongs to the invertebrate defensin family. In terms of processing, disulfide bonds are essential for antimicrobial activity.

The protein resides in the secreted. Functionally, antimicrobial peptide with broad-spectrum activity against Gram-positive bacteria, Gram-negative bacteria, and fungi. Also inhibits clinical isolates, including methicillin-resistant S.aureus (MRSA) (MIC=32 uM), K.pneumoniae, C.albicans and C.parapsilosis. Displays minimal inhibitory concentration (MIC) values similar to minimal bactericidal concentrations (MBC), suggesting a disruptive mechanism mode of action associated with membrane lysis. In vitro, shows hemolytic activity against human red blood cells. This chain is Fungal defensin triintsin, found in Trichophyton interdigitale (strain MR816).